The following is a 218-amino-acid chain: ER lumen protein-retaining receptor (218 aa).

The Lumenal portion of the chain corresponds to 1–2 (MN). The chain crosses the membrane as a helical span at residues 3–23 (LFSFLGDMLHLGSMLILLFKI). Residues 24–57 (KNDKSCAGVSLKSQILFTIVFTARYLDLFTNYVS) are Cytoplasmic-facing. Residues 58 to 78 (LYITFMKITYIAVSYYTLHLI) traverse the membrane as a helical segment. Over 79–94 (ARKYKFTYDKDHDTFK) the chain is Lumenal. Residues 95–115 (IVYLIASCAILSLITYDKTTI) traverse the membrane as a helical segment. The Cytoplasmic segment spans residues 116-123 (GIYSTFLE). A helical membrane pass occupies residues 124–144 (ILWTFSIYLESIAILPQLILL). Residues 145-152 (QRTGEVEA) are Lumenal-facing. The chain crosses the membrane as a helical span at residues 153–173 (LTSNYIVLLGGYRAFYLFNWI). The Cytoplasmic portion of the chain corresponds to 174–184 (YRITFYNWSGK). The chain crosses the membrane as a helical span at residues 185–205 (IEMLSGLLQTILYADFFYYYA). The Lumenal portion of the chain corresponds to 206–218 (KSRMYGKKLVLPQ).

Belongs to the ERD2 family.

It localises to the endoplasmic reticulum membrane. Functionally, required for the retention of luminal endoplasmic reticulum proteins. Determines the specificity of the luminal ER protein retention system. Also required for normal vesicular traffic through the Golgi. In Dictyostelium discoideum (Social amoeba), this protein is ER lumen protein-retaining receptor (kdelr).